The primary structure comprises 475 residues: Aspartyl/glutamyl-tRNA(Asn/Gln) amidotransferase subunit B (475 aa).

The protein belongs to the GatB/GatE family. GatB subfamily. As to quaternary structure, heterotrimer of A, B and C subunits.

The catalysed reaction is L-glutamyl-tRNA(Gln) + L-glutamine + ATP + H2O = L-glutaminyl-tRNA(Gln) + L-glutamate + ADP + phosphate + H(+). It carries out the reaction L-aspartyl-tRNA(Asn) + L-glutamine + ATP + H2O = L-asparaginyl-tRNA(Asn) + L-glutamate + ADP + phosphate + 2 H(+). Functionally, allows the formation of correctly charged Asn-tRNA(Asn) or Gln-tRNA(Gln) through the transamidation of misacylated Asp-tRNA(Asn) or Glu-tRNA(Gln) in organisms which lack either or both of asparaginyl-tRNA or glutaminyl-tRNA synthetases. The reaction takes place in the presence of glutamine and ATP through an activated phospho-Asp-tRNA(Asn) or phospho-Glu-tRNA(Gln). The polypeptide is Aspartyl/glutamyl-tRNA(Asn/Gln) amidotransferase subunit B (Lysinibacillus sphaericus (strain C3-41)).